The chain runs to 748 residues: Polyribonucleotide nucleotidyltransferase (748 aa).

Mg(2+) contacts are provided by Asp487 and Asp493. One can recognise a KH domain in the interval 554-613 (PSTTTIKIDKDKIRDIIGPGGKVIKEICETSGAKIDISDDGTVSVYASDRDKLKVALDKI). Residues 623–691 (GEIFNGTVVK…NKGKAKLTIK (69 aa)) enclose the S1 motif domain. The tract at residues 691 to 748 (KNADKDKSSNNTKPKTNVNNTKDNSEPEQRRDSSKKRAWNEDNNAETAEVITERKYFN) is disordered. Positions 699 to 712 (SNNTKPKTNVNNTK) are enriched in low complexity. Basic and acidic residues predominate over residues 713–722 (DNSEPEQRRD).

This sequence belongs to the polyribonucleotide nucleotidyltransferase family. Mg(2+) is required as a cofactor.

The protein resides in the cytoplasm. It carries out the reaction RNA(n+1) + phosphate = RNA(n) + a ribonucleoside 5'-diphosphate. Involved in mRNA degradation. Catalyzes the phosphorolysis of single-stranded polyribonucleotides processively in the 3'- to 5'-direction. The protein is Polyribonucleotide nucleotidyltransferase of Rickettsia africae (strain ESF-5).